We begin with the raw amino-acid sequence, 331 residues long: Ferrochelatase (331 aa).

His187 and Glu286 together coordinate Fe cation.

The protein belongs to the ferrochelatase family.

The protein resides in the cytoplasm. The catalysed reaction is heme b + 2 H(+) = protoporphyrin IX + Fe(2+). Its pathway is porphyrin-containing compound metabolism; protoheme biosynthesis; protoheme from protoporphyrin-IX: step 1/1. In terms of biological role, catalyzes the ferrous insertion into protoporphyrin IX. The sequence is that of Ferrochelatase from Legionella pneumophila subsp. pneumophila (strain Philadelphia 1 / ATCC 33152 / DSM 7513).